Consider the following 274-residue polypeptide: Acyl-coenzyme A diphosphatase YFT2 (274 aa).

Residues 1-11 (MIRQLNYWSRK) lie on the Cytoplasmic side of the membrane. Residues 12–32 (AYLIYPFQVFVGALLSIVVSS) form a helical membrane-spanning segment. The Lumenal segment spans residues 33–60 (ETLNHQKETCALLKSSNIFNVIFAYKAN). Residues 61–81 (QLWPFLFFSLAFLQIYFHYLA) form a helical membrane-spanning segment. The Cytoplasmic segment spans residues 82 to 124 (RMDILPLPISSTETSSSYLTYTNHWPLLKNRIISIMITQYACK). Residues 125–145 (FVLKYLLLFLNFQFIDHVFIW) form a helical membrane-spanning segment. At 146 to 170 (TGGECSSGSKTTSAEKCRLENGKWD) the chain is on the lumenal side. A helical membrane pass occupies residues 171–191 (GGFDISGHFCFLVSISMILWM). His178 is a catalytic residue. At 192-215 (ELHLFSRFVQAEDMFWVVNKWVRA) the chain is on the cytoplasmic side. A helical transmembrane segment spans residues 216–236 (CLAIVCAVLVIWICILWVTAI). Residues 237–247 (YYHTILEKVLG) are Lumenal-facing. His239 is an active-site residue. A helical membrane pass occupies residues 248-268 (CLMGFICPVFIYHILPKIGIL). Topologically, residues 269–274 (HNYLYL) are cytoplasmic.

It belongs to the FIT family. Yeast FIT2A/YFT2 subfamily.

Its subcellular location is the endoplasmic reticulum membrane. The protein localises to the vacuole. It carries out the reaction an acyl-CoA + H2O = an acyl-4'-phosphopantetheine + adenosine 3',5'-bisphosphate + 2 H(+). It catalyses the reaction (9Z)-octadecenoyl-CoA + H2O = S-(9Z-octadecenoyl)-4'-phosphopantetheine + adenosine 3',5'-bisphosphate + 2 H(+). The catalysed reaction is (5Z,8Z,11Z,14Z)-eicosatetraenoyl-CoA + H2O = S-(5Z,8Z,11Z,14Z-eicosatetraenoyl)-4'-phosphopantetheine + adenosine 3',5'-bisphosphate + 2 H(+). The enzyme catalyses hexadecanoyl-CoA + H2O = S-hexadecanoyl-4'-phosphopantetheine + adenosine 3',5'-bisphosphate + 2 H(+). Fatty acyl-coenzyme A (CoA) diphosphatase that hydrolyzes fatty acyl-CoA to yield acyl-4'-phosphopantetheine and adenosine 3',5'-bisphosphate. Preferentially hydrolyzes unsaturated long-chain acyl-CoA substrates in the endoplasmic reticulum (ER) lumen. This catalytic activity is required for maintaining ER structure and for lipid droplets (LDs) biogenesis, which are lipid storage organelles involved in maintaining lipid and energy homeostasis. May directly bind to diacylglycerol (DAGs) and triacylglycerol, which is also important for LD biogenesis. May support directional budding of nacent LDs from the ER into the cytosol by reducing DAG levels at sites of LD formation. May play a role in the regulation of cell morphology and cytoskeletal organization. Involved in phospholipid biosynthesis. In Saccharomyces cerevisiae (strain ATCC 204508 / S288c) (Baker's yeast), this protein is Acyl-coenzyme A diphosphatase YFT2.